Reading from the N-terminus, the 332-residue chain is D-glutamate N-acetyltransferase (332 aa).

This sequence belongs to the N-acetyltransferase DgcN family.

The catalysed reaction is D-glutamate + acetyl-CoA = N-acetyl-D-glutamate + CoA + H(+). It catalyses the reaction D-aspartate + acetyl-CoA = N-acetyl-D-aspartate + CoA + H(+). It carries out the reaction D-glutamine + acetyl-CoA = N-acetyl-D-glutamine + CoA + H(+). It functions in the pathway amino-acid degradation. In terms of biological role, N-acetyltransferase involved in a deamination-independent D-glutamate degradation pathway, named the DgcN-DgcA pathway. Catalyzes the transfer of the acetyl moiety from acetyl-CoA to D-glutamate to generate N-acetyl-D-glutamate. Can also acetylate D-aspartate and D-glutamine, with lower efficiency. Has low activity with D-asparagine. Cannot use succinyl-CoA. The sequence is that of D-glutamate N-acetyltransferase from Pseudoalteromonas sp.